A 398-amino-acid polypeptide reads, in one-letter code: ATP-dependent (S)-NAD(P)H-hydrate dehydratase 1 (398 aa).

A YjeF C-terminal domain is found at 80 to 391 (LLRKAFQMIP…GYIGEAFELV (312 aa)). (6S)-NADPHX-binding positions include glycine 187 and 240 to 246 (NHVEFQR). Residues 280-284 (KGSID) and 300-309 (GSPKRCGGQG) each bind ATP. Aspartate 310 contributes to the (6S)-NADPHX binding site.

The protein belongs to the NnrD/CARKD family. Mg(2+) is required as a cofactor.

It is found in the cytoplasm. It catalyses the reaction (6S)-NADHX + ATP = ADP + phosphate + NADH + H(+). The catalysed reaction is (6S)-NADPHX + ATP = ADP + phosphate + NADPH + H(+). Functionally, catalyzes the dehydration of the S-form of NAD(P)HX at the expense of ATP, which is converted to ADP. Together with NAD(P)HX epimerase, which catalyzes the epimerization of the S- and R-forms, the enzyme allows the repair of both epimers of NAD(P)HX, a damaged form of NAD(P)H that is a result of enzymatic or heat-dependent hydration. In Puccinia graminis f. sp. tritici (strain CRL 75-36-700-3 / race SCCL) (Black stem rust fungus), this protein is ATP-dependent (S)-NAD(P)H-hydrate dehydratase 1.